The following is a 294-amino-acid chain: Flavin-dependent thymidylate synthase (294 aa).

The 224-residue stretch at 27 to 250 (GFIRVIDYMG…PFTYEAFEEY (224 aa)) folds into the ThyX domain. FAD is bound by residues T73, 96 to 98 (RHR), and E104. DUMP is bound by residues 93-96 (QWIR), 104-108 (EYSAR), and R189. Positions 96–106 (RHRTASVNEYS) match the ThyX motif motif. FAD contacts are provided by residues 205–207 (NLH) and H211. R216 serves as a coordination point for dUMP. R216 functions as the Involved in ionization of N3 of dUMP, leading to its activation in the catalytic mechanism.

The protein belongs to the thymidylate synthase ThyX family. As to quaternary structure, homotetramer. It depends on FAD as a cofactor.

It catalyses the reaction dUMP + (6R)-5,10-methylene-5,6,7,8-tetrahydrofolate + NADPH + H(+) = dTMP + (6S)-5,6,7,8-tetrahydrofolate + NADP(+). It participates in pyrimidine metabolism; dTTP biosynthesis. Functionally, catalyzes the reductive methylation of 2'-deoxyuridine-5'-monophosphate (dUMP) to 2'-deoxythymidine-5'-monophosphate (dTMP) while utilizing 5,10-methylenetetrahydrofolate (mTHF) as the methyl donor, and NADPH and FADH(2) as the reductant. This chain is Flavin-dependent thymidylate synthase, found in Rickettsia prowazekii (strain Madrid E).